The primary structure comprises 335 residues: MDASSSSAPDLADAYDIPWVEKYRPTRVADVGGNSDAVARLQDIARDGNMPNLILSGPPGTGKTTSILSLAHELLGPSYREAVLELNASDDRGLDVVRNKIKMFAQKKVTLQPGRHKIVILDEADSMTSGAQQALRRTMEIYSNTTRFALACNTSSKIIEPIQSRCAIVRFSRLSDQEILGRLMIVVAAEKVPYVPEGLEAIIFTADGDMRQALNNLQATVSGFRFVNQENVFKVCDQPHPLHVKNMVKNVLDGKFDEACSALKQLYDLGYSPTDIITTLFRVIKNYDMAEYLKLELLKETGFAHMRICDGVGSFLQLSGLLAKFALVRETAKAS.

56–63 lines the ATP pocket; that stretch reads SGPPGTGK.

This sequence belongs to the activator 1 small subunits family. In terms of assembly, heterotetramer of subunits RFC2, RFC3, RFC4 and RFC5 that can form a complex with RFC1. As to expression, expressed in roots, leaves, shoot apical meristem (SAM), flag leaves and panicles.

It is found in the nucleus. Its function is as follows. May be involved in DNA replication and thus regulate cell proliferation. This is Replication factor C subunit 4 (RFC4) from Oryza sativa subsp. japonica (Rice).